The primary structure comprises 125 residues: uncharacterized protein (125 aa).

This is an uncharacterized protein from Escherichia coli (strain K12).